The sequence spans 284 residues: Urease accessory protein UreD (284 aa).

The protein belongs to the UreD family. In terms of assembly, ureD, UreF and UreG form a complex that acts as a GTP-hydrolysis-dependent molecular chaperone, activating the urease apoprotein by helping to assemble the nickel containing metallocenter of UreC. The UreE protein probably delivers the nickel.

The protein localises to the cytoplasm. Functionally, required for maturation of urease via the functional incorporation of the urease nickel metallocenter. This chain is Urease accessory protein UreD, found in Bordetella bronchiseptica (strain ATCC BAA-588 / NCTC 13252 / RB50) (Alcaligenes bronchisepticus).